We begin with the raw amino-acid sequence, 564 residues long: Arginine--tRNA ligase (564 aa).

Positions 122–132 match the 'HIGH' region motif; that stretch reads PNIAKPFSIGH.

This sequence belongs to the class-I aminoacyl-tRNA synthetase family. As to quaternary structure, monomer.

The protein localises to the cytoplasm. The enzyme catalyses tRNA(Arg) + L-arginine + ATP = L-arginyl-tRNA(Arg) + AMP + diphosphate. The sequence is that of Arginine--tRNA ligase from Lactococcus lactis subsp. cremoris (strain SK11).